The sequence spans 167 residues: Secreted LysM effector Blys6 (167 aa).

Positions Met-1–Ala-16 are cleaved as a signal peptide. In terms of domain architecture, LysM spans Lys-109–Val-162.

It belongs to the secreted LysM effector family.

Functionally, might have a role in sequestration of chitin oligosaccharides (breakdown products of fungal cell walls that are released during invasion and act as triggers of host immunity) to dampen host defense. The sequence is that of Secreted LysM effector Blys6 from Beauveria bassiana (strain ARSEF 2860) (White muscardine disease fungus).